The sequence spans 414 residues: Transcriptional repressor protein YY1 (414 aa).

Residues 1–170 (MASGDTLYIA…GGGSSSSGGG (170 aa)) are interaction with the SMAD1/SMAD4 complex. Residues 33–81 (VETIETTVVGEEEEEDDDDEDGGGGDHGGGGGHGHAGHHHHHHHHHHHP) are disordered. Residues 42–55 (GEEEEEDDDDEDGG) are compositionally biased toward acidic residues. Residues 57 to 66 (GDHGGGGGHG) show a composition bias toward gly residues. Over residues 67-81 (HAGHHHHHHHHHHHP) the composition is skewed to basic residues. Positions 116–260 (DDSDGLRAED…YSEYMTGKKL (145 aa)) are gly-rich region involved in interaction with HCFC1. Ser118 is subject to Phosphoserine; by CK2. Positions 157-203 (GKSGGGGSSSSGGGRVKKGGGKKSGKKSYLSGGAGAAGGGGADPGNK) are disordered. The span at 158-170 (KSGGGGSSSSGGG) shows a compositional bias: gly residues. The segment covering 171-182 (RVKKGGGKKSGK) has biased composition (basic residues). Residues Lys182 and Lys183 each participate in a glycyl lysine isopeptide (Lys-Gly) (interchain with G-Cter in SUMO2) cross-link. Ser187 is subject to Phosphoserine. Gly residues predominate over residues 188-199 (GGAGAAGGGGAD). Glycyl lysine isopeptide (Lys-Gly) (interchain with G-Cter in SUMO2) cross-links involve residues Lys208 and Lys230. Ser247 is modified (phosphoserine). Positions 257–341 (GKKLPPGGIP…KAFVESSKLK (85 aa)) are involved in nuclear matrix association. Glycyl lysine isopeptide (Lys-Gly) (interchain with G-Cter in SUMO2) cross-links involve residues Lys286 and Lys288. Residues 295–414 (TIACPHKGCT…LTHAKAKNNQ (120 aa)) are binding to DNA. C2H2-type zinc fingers lie at residues 296 to 320 (IACP…LHTH), 325 to 347 (HVCA…QLVH), and 353 to 377 (FQCT…VRIH). Residues Cys298, Cys303, His316, His320, Cys327, Cys330, His343, His347, Cys355, Cys360, His373, and His377 each coordinate Zn(2+). The segment at 333–371 (AFVESSKLKRHQLVHTGEKPFQCTFEGCGKRFSLDFNLR) is involved in repression of activated transcription. Positions 371–397 (RTHVRIHTGDRPYVCPFDGCNKKFAQS) are involved in masking transactivation domain. Thr378 carries the post-translational modification Phosphothreonine. Residues 383 to 407 (YVCPFDGCNKKFAQSTNLKSHILTH) form a C2H2-type 4 zinc finger. The Zn(2+) site is built by Cys385, Cys390, His403, and His407. Glycyl lysine isopeptide (Lys-Gly) (interchain with G-Cter in SUMO2) cross-links involve residues Lys409 and Lys411.

This sequence belongs to the YY transcription factor family. Interacts with YAF2 through the region encompassing the first and second zinc fingers. Component of the chromatin remodeling INO80 complex; specifically part of a complex module associated with the DBINO domain of INO80. Interacts with EED and EZH2; the interactions are indicative for an association with the PRC2/EED-EZH2 complex. Interacts with SFMBT2. Found in a complex with SMAD1 and SMAD4. Found in a complex with YY1, SIN3A and HDAC1. Accessory component of the polycomb repressive deubiquitinase (PR-DUB) complex, at least composed of BAP1, one of ASXL1, ASXL2 or (probably) ASXL3 and one of MBD5 or MBD6; the PR-DUB core associates with a number of accessory proteins, including FOXK1, FOXK2, KDM1B, HCFC1, YY1 and OGT. Interacts (via Gly-rich region) with HCFC1; the interaction is direct. Interacts (via C-terminal zinc-finger domains) with BAP1 (via ULD domain); the interaction is direct and requires HCFC1. Post-translationally, phosphorylation at Ser-118 by CK2 prevents proteolytic cleavage by caspase-7 (CASP7) during apoptosis. Proteolytically cleaved by caspase-7 (CASP7) in response to apoptosis. Phosphorylation at Ser-118 protects against proteolytic cleavage. In terms of processing, transiently poly-ADP-ribosylated by PARP1 upon DNA damage, with the effect of decreasing affinity of YY1 to its cognate DNA binding sites. Post-translationally, ubiquitinated.

Its subcellular location is the nucleus matrix. Its function is as follows. Multifunctional transcription factor that exhibits positive and negative control on a large number of cellular and viral genes by binding to sites overlapping the transcription start site. Binds to the consensus sequence 5'-CCGCCATNTT-3'; some genes have been shown to contain a longer binding motif allowing enhanced binding; the initial CG dinucleotide can be methylated greatly reducing the binding affinity. The effect on transcription regulation is depending upon the context in which it binds and diverse mechanisms of action include direct activation or repression, indirect activation or repression via cofactor recruitment, or activation or repression by disruption of binding sites or conformational DNA changes. Its activity is regulated by transcription factors and cytoplasmic proteins that have been shown to abrogate or completely inhibit YY1-mediated activation or repression. For example, it acts as a repressor in absence of adenovirus E1A protein but as an activator in its presence. Acts synergistically with the SMAD1 and SMAD4 in bone morphogenetic protein (BMP)-mediated cardiac-specific gene expression. Binds to SMAD binding elements (SBEs) (5'-GTCT/AGAC-3') within BMP response element (BMPRE) of cardiac activating regions. May play an important role in development and differentiation. Proposed to recruit the PRC2/EED-EZH2 complex to target genes that are transcriptional repressed. Involved in DNA repair. In vitro, binds to DNA recombination intermediate structures (Holliday junctions). Plays a role in regulating enhancer activation. Recruits the PR-DUB complex to specific gene-regulatory regions. Proposed core component of the chromatin remodeling INO80 complex which is involved in transcriptional regulation, DNA replication and probably DNA repair; proposed to target the INO80 complex to YY1-responsive elements. The protein is Transcriptional repressor protein YY1 (YY1) of Homo sapiens (Human).